A 57-amino-acid polypeptide reads, in one-letter code: Preprotein translocase subunit SecG (57 aa).

Topologically, residues 1-33 are cytoplasmic; the sequence is MPSSKKKKENVPVMSMAGLIRYYEEEHEKYKVD. The chain crosses the membrane as a helical span at residues 34–55; it reads PIYVIIASIVLVAVVVAVTKII. Over 56-57 the chain is Extracellular; sequence PP.

The protein belongs to the SEC61-beta family. In terms of assembly, component of the protein translocase complex. Heterotrimer consisting of alpha (SecY), beta (SecG) and gamma (SecE) subunits. Can form oligomers of the heterotrimer.

It localises to the cell membrane. In terms of biological role, involved in protein export. The function of the beta subunit is unknown, but it may be involved in stabilization of the trimeric complex. This Metallosphaera sedula (strain ATCC 51363 / DSM 5348 / JCM 9185 / NBRC 15509 / TH2) protein is Preprotein translocase subunit SecG.